The following is a 417-amino-acid chain: RH-like protein IA (417 aa).

11 consecutive transmembrane segments (helical) span residues 12–32 (CLPL…YFFT), 44–64 (LVAS…GFGF), 77–97 (VAFS…LDGF), 125–145 (ISVD…MVLV), 172–192 (IYVF…KPLP), 203–223 (TIPS…WPSF), 238–258 (VFNT…GSSL), 265–285 (ISMS…GTSC), 287–307 (LITS…ISIG), 331–351 (NFSL…VHHT), and 358–378 (MIGF…TIAL).

This sequence belongs to the ammonium transporter (TC 2.A.49) family. Rh subfamily.

The protein resides in the membrane. Its function is as follows. May be part of an oligomeric complex which is likely to have a transport or channel function in the erythrocyte membrane. This is RH-like protein IA from Pan troglodytes (Chimpanzee).